Consider the following 173-residue polypeptide: Shikimate kinase 1 (173 aa).

Residue 14–19 (GAGKST) participates in ATP binding. A Mg(2+)-binding site is contributed by S18. Residues D36, R60, and G82 each coordinate substrate. R120 is an ATP binding site. R140 contributes to the substrate binding site.

Belongs to the shikimate kinase family. In terms of assembly, monomer. Requires Mg(2+) as cofactor.

Its subcellular location is the cytoplasm. It catalyses the reaction shikimate + ATP = 3-phosphoshikimate + ADP + H(+). It participates in metabolic intermediate biosynthesis; chorismate biosynthesis; chorismate from D-erythrose 4-phosphate and phosphoenolpyruvate: step 5/7. Functionally, catalyzes the specific phosphorylation of the 3-hydroxyl group of shikimic acid using ATP as a cosubstrate. The protein is Shikimate kinase 1 of Hamiltonella defensa subsp. Acyrthosiphon pisum (strain 5AT).